A 425-amino-acid polypeptide reads, in one-letter code: Serine--tRNA ligase (425 aa).

229-231 provides a ligand contact to L-serine; the sequence is TSE. Residues 259–261 and valine 275 each bind ATP; that span reads RKE. Residue glutamate 282 participates in L-serine binding. 349–352 serves as a coordination point for ATP; the sequence is EVTS. Threonine 384 serves as a coordination point for L-serine.

This sequence belongs to the class-II aminoacyl-tRNA synthetase family. Type-1 seryl-tRNA synthetase subfamily. In terms of assembly, homodimer. The tRNA molecule binds across the dimer.

It is found in the cytoplasm. The enzyme catalyses tRNA(Ser) + L-serine + ATP = L-seryl-tRNA(Ser) + AMP + diphosphate + H(+). It carries out the reaction tRNA(Sec) + L-serine + ATP = L-seryl-tRNA(Sec) + AMP + diphosphate + H(+). It functions in the pathway aminoacyl-tRNA biosynthesis; selenocysteinyl-tRNA(Sec) biosynthesis; L-seryl-tRNA(Sec) from L-serine and tRNA(Sec): step 1/1. Catalyzes the attachment of serine to tRNA(Ser). Is also able to aminoacylate tRNA(Sec) with serine, to form the misacylated tRNA L-seryl-tRNA(Sec), which will be further converted into selenocysteinyl-tRNA(Sec). This chain is Serine--tRNA ligase, found in Borreliella burgdorferi (strain ATCC 35210 / DSM 4680 / CIP 102532 / B31) (Borrelia burgdorferi).